Reading from the N-terminus, the 505-residue chain is UDP-N-acetylmuramyl-tripeptide synthetase (505 aa).

UDP-N-acetyl-alpha-D-muramoyl-L-alanyl-D-glutamate is bound at residue S35. 118-124 is a binding site for ATP; the sequence is GTDGKSS. UDP-N-acetyl-alpha-D-muramoyl-L-alanyl-D-glutamate contacts are provided by residues 163-164, T190, and R200; that span reads ST. N6-carboxylysine is present on K232.

It belongs to the MurCDEF family. MurE subfamily. Carboxylation is probably crucial for Mg(2+) binding and, consequently, for the gamma-phosphate positioning of ATP.

The protein localises to the cytoplasm. It participates in cell wall biogenesis; peptidoglycan biosynthesis. Catalyzes the addition of an amino acid to the nucleotide precursor UDP-N-acetylmuramoyl-L-alanyl-D-glutamate (UMAG) in the biosynthesis of bacterial cell-wall peptidoglycan. In Borreliella afzelii (strain PKo) (Borrelia afzelii), this protein is UDP-N-acetylmuramyl-tripeptide synthetase.